Here is a 115-residue protein sequence, read N- to C-terminus: NAD(P)H-quinone oxidoreductase subunit M (115 aa).

Belongs to the complex I NdhM subunit family. NDH-1 can be composed of about 15 different subunits; different subcomplexes with different compositions have been identified which probably have different functions.

The protein resides in the cellular thylakoid membrane. It carries out the reaction a plastoquinone + NADH + (n+1) H(+)(in) = a plastoquinol + NAD(+) + n H(+)(out). The enzyme catalyses a plastoquinone + NADPH + (n+1) H(+)(in) = a plastoquinol + NADP(+) + n H(+)(out). NDH-1 shuttles electrons from an unknown electron donor, via FMN and iron-sulfur (Fe-S) centers, to quinones in the respiratory and/or the photosynthetic chain. The immediate electron acceptor for the enzyme in this species is believed to be plastoquinone. Couples the redox reaction to proton translocation, and thus conserves the redox energy in a proton gradient. Cyanobacterial NDH-1 also plays a role in inorganic carbon-concentration. This is NAD(P)H-quinone oxidoreductase subunit M from Prochlorococcus marinus (strain MIT 9313).